Reading from the N-terminus, the 127-residue chain is Anti-adapter protein IraD (127 aa).

This sequence belongs to the GpW/Gp25 family. IraD subfamily. As to quaternary structure, interacts with RssB.

The protein localises to the cytoplasm. Functionally, inhibits RpoS proteolysis by regulating RssB activity, thereby increasing the stability of the sigma stress factor RpoS during oxidative stress. Its effect on RpoS stability is due to its interaction with RssB, which probably blocks the interaction of RssB with RpoS, and the consequent delivery of the RssB-RpoS complex to the ClpXP protein degradation pathway. The sequence is that of Anti-adapter protein IraD from Escherichia coli O6:H1 (strain CFT073 / ATCC 700928 / UPEC).